We begin with the raw amino-acid sequence, 237 residues long: N-(5'-phosphoribosyl)anthranilate isomerase (237 aa).

Belongs to the TrpF family.

It catalyses the reaction N-(5-phospho-beta-D-ribosyl)anthranilate = 1-(2-carboxyphenylamino)-1-deoxy-D-ribulose 5-phosphate. It functions in the pathway amino-acid biosynthesis; L-tryptophan biosynthesis; L-tryptophan from chorismate: step 3/5. This Desulfitobacterium hafniense (strain DSM 10664 / DCB-2) protein is N-(5'-phosphoribosyl)anthranilate isomerase.